Reading from the N-terminus, the 507-residue chain is Histidine ammonia-lyase (507 aa).

A cross-link (5-imidazolinone (Ala-Gly)) is located at residues 141–143 (ASG). 2,3-didehydroalanine (Ser) is present on serine 142.

It belongs to the PAL/histidase family. Post-translationally, contains an active site 4-methylidene-imidazol-5-one (MIO), which is formed autocatalytically by cyclization and dehydration of residues Ala-Ser-Gly.

It is found in the cytoplasm. The enzyme catalyses L-histidine = trans-urocanate + NH4(+). It participates in amino-acid degradation; L-histidine degradation into L-glutamate; N-formimidoyl-L-glutamate from L-histidine: step 1/3. The sequence is that of Histidine ammonia-lyase from Burkholderia pseudomallei (strain 668).